We begin with the raw amino-acid sequence, 818 residues long: Fibrous sheath CABYR-binding protein (818 aa).

The interval 1–61 is disordered; sequence MEEKDESEQS…PKAALSIGNI (61 aa). Residues S25, S57, and S182 each carry the phosphoserine modification. Disordered stretches follow at residues 195 to 727 and 773 to 805; these read SFSK…PFIT and LESG…NEGV. Low complexity-rich tracts occupy residues 490–511, 544–560, and 697–715; these read SPPA…PAEE, EAPA…PAEE, and AELQ…VSVE. Residues 773-794 show a composition bias toward basic and acidic residues; it reads LESGNLDDKPKSEEPLERDTIP.

Interacts with CABYR. Interacts with ROPN1 and ROPN1L; the interaction increases upon spermatozoa capacitation conditions. Phosphorylated by PKA upon spermatozoa capacitation conditions.

It localises to the cell projection. The protein resides in the cilium. Its subcellular location is the flagellum. Its function is as follows. May be involved in the later stages of fibrous sheath biogenesis and spermatozoa capacitation. Inhibits ROPN1 and ROPN1L SUMOylation. Binds calcium. The sequence is that of Fibrous sheath CABYR-binding protein from Bos taurus (Bovine).